Here is a 589-residue protein sequence, read N- to C-terminus: Sulfite reductase [NADPH] hemoprotein beta-component (589 aa).

Positions 443, 449, 488, and 492 each coordinate [4Fe-4S] cluster. Residue cysteine 492 coordinates siroheme.

Belongs to the nitrite and sulfite reductase 4Fe-4S domain family. In terms of assembly, alpha(8)-beta(8). The alpha component is a flavoprotein, the beta component is a hemoprotein. Requires siroheme as cofactor. The cofactor is [4Fe-4S] cluster.

It catalyses the reaction hydrogen sulfide + 3 NADP(+) + 3 H2O = sulfite + 3 NADPH + 4 H(+). The protein operates within sulfur metabolism; hydrogen sulfide biosynthesis; hydrogen sulfide from sulfite (NADPH route): step 1/1. Component of the sulfite reductase complex that catalyzes the 6-electron reduction of sulfite to sulfide. This is one of several activities required for the biosynthesis of L-cysteine from sulfate. This chain is Sulfite reductase [NADPH] hemoprotein beta-component, found in Neisseria meningitidis serogroup C / serotype 2a (strain ATCC 700532 / DSM 15464 / FAM18).